A 133-amino-acid polypeptide reads, in one-letter code: Small ribosomal subunit protein uS8 (133 aa).

The protein belongs to the universal ribosomal protein uS8 family. As to quaternary structure, part of the 30S ribosomal subunit. Contacts proteins S5 and S12.

Its function is as follows. One of the primary rRNA binding proteins, it binds directly to 16S rRNA central domain where it helps coordinate assembly of the platform of the 30S subunit. This is Small ribosomal subunit protein uS8 from Leptospira borgpetersenii serovar Hardjo-bovis (strain JB197).